Reading from the N-terminus, the 174-residue chain is Shikimate kinase (174 aa).

Position 14–19 (14–19 (GAGKST)) interacts with ATP. Serine 18 is a binding site for Mg(2+). Residues aspartate 36, arginine 60, and glycine 82 each contribute to the substrate site. Arginine 120 contacts ATP. Residue arginine 139 coordinates substrate. ATP is bound at residue glutamine 156.

It belongs to the shikimate kinase family. As to quaternary structure, monomer. Mg(2+) is required as a cofactor.

It localises to the cytoplasm. It catalyses the reaction shikimate + ATP = 3-phosphoshikimate + ADP + H(+). The protein operates within metabolic intermediate biosynthesis; chorismate biosynthesis; chorismate from D-erythrose 4-phosphate and phosphoenolpyruvate: step 5/7. In terms of biological role, catalyzes the specific phosphorylation of the 3-hydroxyl group of shikimic acid using ATP as a cosubstrate. The protein is Shikimate kinase of Vibrio cholerae serotype O1 (strain ATCC 39541 / Classical Ogawa 395 / O395).